Reading from the N-terminus, the 261-residue chain is Cytochrome c oxidase subunit 3 (261 aa).

Topologically, residues 1–15 (MTHQTHAYHMVNPSP) are mitochondrial matrix. A helical transmembrane segment spans residues 16–34 (WPLTGALSALLMTSGLVMW). Residues 35-40 (FHYHST) are Mitochondrial intermembrane-facing. The chain crosses the membrane as a helical span at residues 41-66 (ILVLLGLLTNILTMYQWWRDVVREGT). Over 67 to 72 (FQGHHT) the chain is Mitochondrial matrix. The chain crosses the membrane as a helical span at residues 73–105 (PTVQKGLRYGMVLFIISEVFFFAGFFWAFYHSS). Residues 106–128 (LAPTPELGGCWPPTGIHPLDPME) are Mitochondrial intermembrane-facing. A helical transmembrane segment spans residues 129–152 (VPLLNTSVLLASGVTITWAHHSLM). Over 153–155 (EGN) the chain is Mitochondrial matrix. A helical membrane pass occupies residues 156 to 183 (RKQMLQALFITISLGIYFTLLQASEYHE). At 184–190 (ASFSISD) the chain is on the mitochondrial intermembrane side. A helical transmembrane segment spans residues 191-223 (GIYGSTFFMATGFHGLHVIIGSTFLAVCFLRQL). The Mitochondrial matrix segment spans residues 224–232 (KFHFTSNHH). A helical transmembrane segment spans residues 233-256 (FGFEAAAWYWHFVDVVWLFLYVSI). Over 257–261 (YWWGS) the chain is Mitochondrial intermembrane.

Belongs to the cytochrome c oxidase subunit 3 family. In terms of assembly, component of the cytochrome c oxidase (complex IV, CIV), a multisubunit enzyme composed of 14 subunits. The complex is composed of a catalytic core of 3 subunits MT-CO1, MT-CO2 and MT-CO3, encoded in the mitochondrial DNA, and 11 supernumerary subunits COX4I, COX5A, COX5B, COX6A, COX6B, COX6C, COX7A, COX7B, COX7C, COX8 and NDUFA4, which are encoded in the nuclear genome. The complex exists as a monomer or a dimer and forms supercomplexes (SCs) in the inner mitochondrial membrane with NADH-ubiquinone oxidoreductase (complex I, CI) and ubiquinol-cytochrome c oxidoreductase (cytochrome b-c1 complex, complex III, CIII), resulting in different assemblies (supercomplex SCI(1)III(2)IV(1) and megacomplex MCI(2)III(2)IV(2)).

It localises to the mitochondrion inner membrane. The catalysed reaction is 4 Fe(II)-[cytochrome c] + O2 + 8 H(+)(in) = 4 Fe(III)-[cytochrome c] + 2 H2O + 4 H(+)(out). In terms of biological role, component of the cytochrome c oxidase, the last enzyme in the mitochondrial electron transport chain which drives oxidative phosphorylation. The respiratory chain contains 3 multisubunit complexes succinate dehydrogenase (complex II, CII), ubiquinol-cytochrome c oxidoreductase (cytochrome b-c1 complex, complex III, CIII) and cytochrome c oxidase (complex IV, CIV), that cooperate to transfer electrons derived from NADH and succinate to molecular oxygen, creating an electrochemical gradient over the inner membrane that drives transmembrane transport and the ATP synthase. Cytochrome c oxidase is the component of the respiratory chain that catalyzes the reduction of oxygen to water. Electrons originating from reduced cytochrome c in the intermembrane space (IMS) are transferred via the dinuclear copper A center (CU(A)) of subunit 2 and heme A of subunit 1 to the active site in subunit 1, a binuclear center (BNC) formed by heme A3 and copper B (CU(B)). The BNC reduces molecular oxygen to 2 water molecules using 4 electrons from cytochrome c in the IMS and 4 protons from the mitochondrial matrix. The protein is Cytochrome c oxidase subunit 3 (MT-CO3) of Dugong dugon (Dugong).